The chain runs to 612 residues: Dihydroxy-acid dehydratase (612 aa).

Aspartate 81 contacts Mg(2+). [2Fe-2S] cluster is bound at residue cysteine 122. Residues aspartate 123 and lysine 124 each contribute to the Mg(2+) site. N6-carboxylysine is present on lysine 124. Cysteine 195 is a [2Fe-2S] cluster binding site. Glutamate 491 is a binding site for Mg(2+). The Proton acceptor role is filled by serine 517.

This sequence belongs to the IlvD/Edd family. Homodimer. Requires [2Fe-2S] cluster as cofactor. Mg(2+) serves as cofactor.

It carries out the reaction (2R)-2,3-dihydroxy-3-methylbutanoate = 3-methyl-2-oxobutanoate + H2O. It catalyses the reaction (2R,3R)-2,3-dihydroxy-3-methylpentanoate = (S)-3-methyl-2-oxopentanoate + H2O. It functions in the pathway amino-acid biosynthesis; L-isoleucine biosynthesis; L-isoleucine from 2-oxobutanoate: step 3/4. It participates in amino-acid biosynthesis; L-valine biosynthesis; L-valine from pyruvate: step 3/4. Functionally, functions in the biosynthesis of branched-chain amino acids. Catalyzes the dehydration of (2R,3R)-2,3-dihydroxy-3-methylpentanoate (2,3-dihydroxy-3-methylvalerate) into 2-oxo-3-methylpentanoate (2-oxo-3-methylvalerate) and of (2R)-2,3-dihydroxy-3-methylbutanoate (2,3-dihydroxyisovalerate) into 2-oxo-3-methylbutanoate (2-oxoisovalerate), the penultimate precursor to L-isoleucine and L-valine, respectively. In Haemophilus influenzae (strain PittEE), this protein is Dihydroxy-acid dehydratase.